The chain runs to 128 residues: Aspartate 1-decarboxylase (128 aa).

Ser25 serves as the catalytic Schiff-base intermediate with substrate; via pyruvic acid. Ser25 bears the Pyruvic acid (Ser) mark. Position 57 (Thr57) interacts with substrate. Tyr58 (proton donor) is an active-site residue. 73–75 provides a ligand contact to substrate; that stretch reads GSA.

This sequence belongs to the PanD family. Heterooctamer of four alpha and four beta subunits. Pyruvate serves as cofactor. Post-translationally, is synthesized initially as an inactive proenzyme, which is activated by self-cleavage at a specific serine bond to produce a beta-subunit with a hydroxyl group at its C-terminus and an alpha-subunit with a pyruvoyl group at its N-terminus.

The protein resides in the cytoplasm. The catalysed reaction is L-aspartate + H(+) = beta-alanine + CO2. It functions in the pathway cofactor biosynthesis; (R)-pantothenate biosynthesis; beta-alanine from L-aspartate: step 1/1. Catalyzes the pyruvoyl-dependent decarboxylation of aspartate to produce beta-alanine. This is Aspartate 1-decarboxylase from Burkholderia cenocepacia (strain ATCC BAA-245 / DSM 16553 / LMG 16656 / NCTC 13227 / J2315 / CF5610) (Burkholderia cepacia (strain J2315)).